A 549-amino-acid chain; its full sequence is MFS-type transporter TwmF (549 aa).

The next 4 helical transmembrane spans lie at 29–49 (IVIG…VLTI), 63–83 (NFIW…PLFG), 99–119 (VAIF…AMLI), and 126–146 (GVGS…LVPL). The N-linked (GlcNAc...) asparagine glycan is linked to Asn-151. The next 10 helical transmembrane spans lie at 155–175 (ILMS…GAIV), 182–202 (WVFY…FIFL), 221–241 (LVGN…LSYA), 249–269 (SWHT…FAGL), 291–311 (IILA…LFFL), 328–348 (VALL…AIAL), 355–375 (KPVH…FTLF), 390–410 (IVAF…QAFI), 421–441 (AWYF…AAIF), and 502–522 (VSIA…DVGL).

This sequence belongs to the major facilitator superfamily.

Its subcellular location is the membrane. MFS efflux transporter; part of the gene cluster that mediates the biosynthesis of wortmanamides A and B, reduced long-chain polyketides amidated with a specific omega-amino acid, 5-aminopentanoic acid (5PA). The polypeptide is MFS-type transporter TwmF (Talaromyces wortmannii (Penicillium wortmannii)).